A 665-amino-acid chain; its full sequence is MDRPAAAAAAGCEGGGGPNPGPAGGRRPPRAAGGATAGSRQPSVETLDSPTGSHVEWCKQLIAATISSQISGSVTSENVSRDYKALRDGNKLAQMEEAPLFPGESIKAIVKDVMYICPFMGAVSGTLTVTDFKLYFKNVERDPHFILDVPLGVISRVEKIGAQSHGDNSCGIEIVCKDMRNLRLAYKQEEQSKLGIFENLNKHAFPLSNGQALFAFSYKEKFPINGWKVYDPVSEYKRQGLPNESWKISKINSNYEFCDTYPAIIVVPTSVKDDDLSKVAAFRAKGRVPVLSWIHPESQATITRCSQPLVGPNDKRCKEDEKYLQTIMDANAQSHKLIIFDARQNSVADTNKTKGGGYESESAYPNAELVFLEIHNIHVMRESLRKLKEIVYPSIDEARWLSNVDGTHWLEYIRMLLAGAVRIADKIESGKTSVVVHCSDGWDRTAQLTSLAMLMLDSYYRTIKGFETLVEKEWISFGHRFALRVGHGNDNHADADRSPIFLQFVDCVWQMTRQFPSAFEFNELFLITILDHLYSCLFGTFLCNCEQQRFKEDVYTKTISLWSYINSQLDEFSNPFFVNYENHVLYPVASLSHLELWVNYYVRWNPRMRPQMPIHQNLKELLAVRAELQKRVEGLQREVATRAVSSSSERGSSPSHSATSVHTSV.

N-acetylmethionine is present on Met-1. Positions 1–11 (MDRPAAAAAAG) are enriched in low complexity. The interval 1–51 (MDRPAAAAAAGCEGGGGPNPGPAGGRRPPRAAGGATAGSRQPSVETLDSPT) is disordered. The segment covering 12 to 24 (CEGGGGPNPGPAG) has biased composition (gly residues). Over residues 39 to 51 (SRQPSVETLDSPT) the composition is skewed to polar residues. 2 positions are modified to phosphoserine: Ser-43 and Ser-49. The GRAM domain occupies 90–161 (NKLAQMEEAP…GVISRVEKIG (72 aa)). The region spanning 226-601 (GWKVYDPVSE…SHLELWVNYY (376 aa)) is the Myotubularin phosphatase domain. The a 1,2-diacyl-sn-glycero-3-phospho-(1D-myo-inositol-3-phosphate) site is built by Asn-351, Asn-376, and Ile-377. Cys-438 (phosphocysteine intermediate) is an active-site residue. A 1,2-diacyl-sn-glycero-3-phospho-(1D-myo-inositol-3-phosphate)-binding residues include Ser-439, Asp-440, Gly-441, Trp-442, Asp-443, Arg-444, and Arg-484. Ser-439 provides a ligand contact to phosphate. Residues Gly-441, Trp-442, Asp-443, and Arg-444 each contribute to the phosphate site. Residues 608-665 (MRPQMPIHQNLKELLAVRAELQKRVEGLQREVATRAVSSSSERGSSPSHSATSVHTSV) are required for dimerization. The tract at residues 642–665 (RAVSSSSERGSSPSHSATSVHTSV) is disordered. The span at 645-657 (SSSSERGSSPSHS) shows a compositional bias: low complexity.

The protein belongs to the protein-tyrosine phosphatase family. Non-receptor class myotubularin subfamily. As to quaternary structure, homodimer.

The protein localises to the cell membrane. The protein resides in the cytoplasm. The enzyme catalyses a 1,2-diacyl-sn-glycero-3-phospho-(1D-myo-inositol-3-phosphate) + H2O = a 1,2-diacyl-sn-glycero-3-phospho-(1D-myo-inositol) + phosphate. It carries out the reaction 1,2-dioctanoyl-sn-glycero-3-phospho-(1-D-myo-inositol-3-phosphate) + H2O = 1,2-dioctanoyl-sn-glycero-3-phospho-(1D-myo-inositol) + phosphate. It catalyses the reaction a 1,2-diacyl-sn-glycero-3-phospho-(1D-myo-inositol-3,5-bisphosphate) + H2O = a 1,2-diacyl-sn-glycero-3-phospho-(1D-myo-inositol-5-phosphate) + phosphate. Functionally, lipid phosphatase that specifically dephosphorylates the D-3 position of phosphatidylinositol 3-phosphate, generating phosphatidylinositol. Could also dephosphorylate phosphatidylinositol 3,5-bisphosphate to produce phosphatidylinositol 5-phosphate. In Homo sapiens (Human), this protein is Phosphatidylinositol-3-phosphate phosphatase MTMR1.